The following is a 66-amino-acid chain: DNA-directed RNA polymerase subunit omega (66 aa).

Belongs to the RNA polymerase subunit omega family. In terms of assembly, the RNAP catalytic core consists of 2 alpha, 1 beta, 1 beta' and 1 omega subunit. When a sigma factor is associated with the core the holoenzyme is formed, which can initiate transcription.

The catalysed reaction is RNA(n) + a ribonucleoside 5'-triphosphate = RNA(n+1) + diphosphate. In terms of biological role, promotes RNA polymerase assembly. Latches the N- and C-terminal regions of the beta' subunit thereby facilitating its interaction with the beta and alpha subunits. The polypeptide is DNA-directed RNA polymerase subunit omega (Clostridium botulinum (strain Eklund 17B / Type B)).